The following is a 218-amino-acid chain: Ribonuclease HII (218 aa).

The region spanning 24-218 (ESIAGVDEVG…KLFAVNGSLT (195 aa)) is the RNase H type-2 domain. A divalent metal cation contacts are provided by aspartate 30, glutamate 31, and aspartate 126.

This sequence belongs to the RNase HII family. Requires Mn(2+) as cofactor. It depends on Mg(2+) as a cofactor.

Its subcellular location is the cytoplasm. It carries out the reaction Endonucleolytic cleavage to 5'-phosphomonoester.. Functionally, endonuclease that specifically degrades the RNA of RNA-DNA hybrids. This Prochlorococcus marinus (strain MIT 9313) protein is Ribonuclease HII.